Here is a 555-residue protein sequence, read N- to C-terminus: Formate--tetrahydrofolate ligase (555 aa).

65-72 (TPAGEGKT) is a binding site for ATP.

It belongs to the formate--tetrahydrofolate ligase family.

It catalyses the reaction (6S)-5,6,7,8-tetrahydrofolate + formate + ATP = (6R)-10-formyltetrahydrofolate + ADP + phosphate. Its pathway is one-carbon metabolism; tetrahydrofolate interconversion. In Thermoanaerobacter sp. (strain X514), this protein is Formate--tetrahydrofolate ligase.